A 237-amino-acid polypeptide reads, in one-letter code: Ribosomal RNA small subunit methyltransferase G (237 aa).

S-adenosyl-L-methionine-binding positions include Gly78, Phe83, 129–130, and Arg148; that span reads AE. The segment at 218-237 is disordered; that stretch reads KKETPNKYPRKAGMPNKRPL.

Belongs to the methyltransferase superfamily. RNA methyltransferase RsmG family.

It is found in the cytoplasm. Its function is as follows. Specifically methylates the N7 position of a guanine in 16S rRNA. The polypeptide is Ribosomal RNA small subunit methyltransferase G (Streptococcus pneumoniae serotype 19F (strain G54)).